The chain runs to 224 residues: Lipoprotein-releasing system ATP-binding protein LolD (224 aa).

The ABC transporter domain maps to 4 to 224; sequence LSIRNVFKSY…RLAGGEVSEA (221 aa). 40 to 47 contacts ATP; sequence GASGAGKS.

This sequence belongs to the ABC transporter superfamily. Lipoprotein translocase (TC 3.A.1.125) family. As to quaternary structure, the complex is composed of two ATP-binding proteins (LolD) and two transmembrane proteins (LolC and LolE).

Its subcellular location is the cell inner membrane. Part of the ABC transporter complex LolCDE involved in the translocation of mature outer membrane-directed lipoproteins, from the inner membrane to the periplasmic chaperone, LolA. Responsible for the formation of the LolA-lipoprotein complex in an ATP-dependent manner. This chain is Lipoprotein-releasing system ATP-binding protein LolD, found in Myxococcus xanthus (strain DK1622).